Here is a 710-residue protein sequence, read N- to C-terminus: Polyribonucleotide nucleotidyltransferase (710 aa).

Mg(2+) contacts are provided by aspartate 491 and aspartate 497. Residues 559–618 (PRLITIKINPEKIRDVIGKGGAVIRALTEETGTQIDISDEGVVTIASVDAAAGQEAKRRI) enclose the KH domain. An S1 motif domain is found at 628–696 (GKVYEGTVLK…DRGRLKLSMK (69 aa)).

This sequence belongs to the polyribonucleotide nucleotidyltransferase family. The cofactor is Mg(2+).

Its subcellular location is the cytoplasm. The enzyme catalyses RNA(n+1) + phosphate = RNA(n) + a ribonucleoside 5'-diphosphate. Functionally, involved in mRNA degradation. Catalyzes the phosphorolysis of single-stranded polyribonucleotides processively in the 3'- to 5'-direction. This is Polyribonucleotide nucleotidyltransferase from Herminiimonas arsenicoxydans.